The following is a 26-amino-acid chain: TRSGGACNSHNQCCDDFCSTATSTCV.

2 cysteine pairs are disulfide-bonded: Cys-7–Cys-18 and Cys-13–Cys-25.

Belongs to the conotoxin O1 superfamily. In terms of tissue distribution, expressed by the venom duct.

Its subcellular location is the secreted. The protein is Conotoxin Eb6.15 (E1) of Conus ebraeus (Hebrew cone).